The chain runs to 366 residues: Chorismate synthase (366 aa).

NADP(+) contacts are provided by R48 and R54. FMN-binding positions include 132-134 (RSS), 244-245 (NA), G289, 304-308 (KPTSS), and R330.

It belongs to the chorismate synthase family. As to quaternary structure, homotetramer. It depends on FMNH2 as a cofactor.

The enzyme catalyses 5-O-(1-carboxyvinyl)-3-phosphoshikimate = chorismate + phosphate. The protein operates within metabolic intermediate biosynthesis; chorismate biosynthesis; chorismate from D-erythrose 4-phosphate and phosphoenolpyruvate: step 7/7. In terms of biological role, catalyzes the anti-1,4-elimination of the C-3 phosphate and the C-6 proR hydrogen from 5-enolpyruvylshikimate-3-phosphate (EPSP) to yield chorismate, which is the branch point compound that serves as the starting substrate for the three terminal pathways of aromatic amino acid biosynthesis. This reaction introduces a second double bond into the aromatic ring system. The sequence is that of Chorismate synthase from Methylorubrum populi (strain ATCC BAA-705 / NCIMB 13946 / BJ001) (Methylobacterium populi).